Reading from the N-terminus, the 267-residue chain is NAD kinase (267 aa).

Aspartate 45 serves as the catalytic Proton acceptor. Residues aspartate 45–glycine 46, asparagine 121–glutamate 122, arginine 147, aspartate 149, threonine 160–serine 165, and alanine 184 each bind NAD(+).

Belongs to the NAD kinase family. The cofactor is a divalent metal cation.

The protein resides in the cytoplasm. The enzyme catalyses NAD(+) + ATP = ADP + NADP(+) + H(+). Its function is as follows. Involved in the regulation of the intracellular balance of NAD and NADP, and is a key enzyme in the biosynthesis of NADP. Catalyzes specifically the phosphorylation on 2'-hydroxyl of the adenosine moiety of NAD to yield NADP. The sequence is that of NAD kinase from Lactobacillus acidophilus (strain ATCC 700396 / NCK56 / N2 / NCFM).